We begin with the raw amino-acid sequence, 121 residues long: Phosphoribosyl-AMP cyclohydrolase (121 aa).

Asp74 provides a ligand contact to Mg(2+). A Zn(2+)-binding site is contributed by Cys75. Residues Asp76 and Asp78 each coordinate Mg(2+). Positions 91 and 98 each coordinate Zn(2+).

Belongs to the PRA-CH family. As to quaternary structure, homodimer. Mg(2+) is required as a cofactor. It depends on Zn(2+) as a cofactor.

The protein localises to the cytoplasm. It carries out the reaction 1-(5-phospho-beta-D-ribosyl)-5'-AMP + H2O = 1-(5-phospho-beta-D-ribosyl)-5-[(5-phospho-beta-D-ribosylamino)methylideneamino]imidazole-4-carboxamide. Its pathway is amino-acid biosynthesis; L-histidine biosynthesis; L-histidine from 5-phospho-alpha-D-ribose 1-diphosphate: step 3/9. Functionally, catalyzes the hydrolysis of the adenine ring of phosphoribosyl-AMP. The sequence is that of Phosphoribosyl-AMP cyclohydrolase from Methanothrix thermoacetophila (strain DSM 6194 / JCM 14653 / NBRC 101360 / PT) (Methanosaeta thermophila).